The chain runs to 115 residues: MASSAVIKLALVVALCMAVSVAHAITCSQVSANLAPCINYVRSGGAVPPACCNGIKTINGLAKTTPDRQAACNCLKNLAGSVSGVNPGNAESLPGKCGVNVPYKISTSTNCATVK.

Residues 1 to 24 form the signal peptide; that stretch reads MASSAVIKLALVVALCMAVSVAHA. Cystine bridges form between Cys27–Cys74, Cys37–Cys51, Cys52–Cys97, and Cys72–Cys111.

Belongs to the plant LTP family.

Functionally, plant non-specific lipid-transfer proteins transfer phospholipids as well as galactolipids across membranes. May play a role in wax or cutin deposition in the cell walls of expanding epidermal cells and certain secretory tissues. This Pyrus communis (Pear) protein is Non-specific lipid-transfer protein.